Consider the following 87-residue polypeptide: UPF0335 protein Meso_3367 (87 aa).

The protein belongs to the UPF0335 family.

The polypeptide is UPF0335 protein Meso_3367 (Chelativorans sp. (strain BNC1)).